The primary structure comprises 351 residues: S-adenosylmethionine:tRNA ribosyltransferase-isomerase (351 aa).

Belongs to the QueA family. As to quaternary structure, monomer.

It localises to the cytoplasm. It catalyses the reaction 7-aminomethyl-7-carbaguanosine(34) in tRNA + S-adenosyl-L-methionine = epoxyqueuosine(34) in tRNA + adenine + L-methionine + 2 H(+). It functions in the pathway tRNA modification; tRNA-queuosine biosynthesis. Transfers and isomerizes the ribose moiety from AdoMet to the 7-aminomethyl group of 7-deazaguanine (preQ1-tRNA) to give epoxyqueuosine (oQ-tRNA). The protein is S-adenosylmethionine:tRNA ribosyltransferase-isomerase of Phocaeicola vulgatus (strain ATCC 8482 / DSM 1447 / JCM 5826 / CCUG 4940 / NBRC 14291 / NCTC 11154) (Bacteroides vulgatus).